The primary structure comprises 236 residues: 2-C-methyl-D-erythritol 4-phosphate cytidylyltransferase (236 aa).

It belongs to the IspD/TarI cytidylyltransferase family. IspD subfamily. As to quaternary structure, homodimer.

The enzyme catalyses 2-C-methyl-D-erythritol 4-phosphate + CTP + H(+) = 4-CDP-2-C-methyl-D-erythritol + diphosphate. It functions in the pathway isoprenoid biosynthesis; isopentenyl diphosphate biosynthesis via DXP pathway; isopentenyl diphosphate from 1-deoxy-D-xylulose 5-phosphate: step 2/6. Catalyzes the formation of 4-diphosphocytidyl-2-C-methyl-D-erythritol from CTP and 2-C-methyl-D-erythritol 4-phosphate (MEP). The protein is 2-C-methyl-D-erythritol 4-phosphate cytidylyltransferase of Escherichia coli O157:H7.